Consider the following 561-residue polypeptide: Centromere protein T (561 aa).

Residues 1-83 (MADHNPDSDS…HIQASGHLEE (83 aa)) are disordered. Basic and acidic residues predominate over residues 18-27 (RVLDTADPRT). A compositionally biased stretch (low complexity) spans 34–46 (ARAGARRALLETA). Residue Ser-47 is modified to Phosphoserine. At Thr-85 the chain carries Phosphothreonine. The flexible stalk domain stretch occupies residues 93–421 (ILLTAPESSI…RHHQFLEPAP (329 aa)). Disordered stretches follow at residues 256–292 (HSLP…PGKP) and 333–457 (AEKK…DPHK). The segment covering 276–288 (KTQSSGPGLQKNS) has biased composition (polar residues). Phosphoserine is present on residues Ser-343, Ser-345, and Ser-356. The span at 357 to 367 (RVEEAEGHTEV) shows a compositional bias: basic and acidic residues. Ser-373, Ser-385, Ser-386, and Ser-397 each carry phosphoserine. A compositionally biased stretch (low complexity) spans 395 to 407 (AASPESASSTPES).

The protein belongs to the CENP-T/CNN1 family. In terms of assembly, component of the CENPA-CAD complex, composed of CENPI, CENPK, CENPL, CENPO, CENPP, CENPQ, CENPR and CENPS. The CENPA-CAD complex is probably recruited on centromeres by the CENPA-NAC complex, at least composed of CENPA, CENPC, CENPH, CENPM, CENPN, CENPT and CENPU. Identified in a centromeric complex containing histones H2A, H2B, H3 and H4, and at least CENPA, CENPB, CENPC, CENPT, CENPN, HJURP, SUPT16H, SSRP1 and RSF1. Interacts (via N-terminus) with the NDC80 complex. Heterodimer with CENPW; this dimer coassembles with CENPS-CENPX heterodimers at centromeres to form the tetrameric CENP-T-W-S-X complex. Dynamically phosphorylated at Ser-47 and probably also other sites during the cell cycle. Phosphorylated at Ser-47 during G2 phase, metaphase and anaphase, but not during telophase or G1 phase.

The protein resides in the nucleus. It localises to the chromosome. The protein localises to the centromere. Its subcellular location is the kinetochore. Component of the CENPA-NAC (nucleosome-associated) complex, a complex that plays a central role in assembly of kinetochore proteins, mitotic progression and chromosome segregation. The CENPA-NAC complex recruits the CENPA-CAD (nucleosome distal) complex and may be involved in incorporation of newly synthesized CENPA into centromeres. Part of a nucleosome-associated complex that binds specifically to histone H3-containing nucleosomes at the centromere, as opposed to nucleosomes containing CENPA. Component of the heterotetrameric CENP-T-W-S-X complex that binds and supercoils DNA, and plays an important role in kinetochore assembly. CENPT has a fundamental role in kinetochore assembly and function. It is one of the inner kinetochore proteins, with most further proteins binding downstream. Required for normal chromosome organization and normal progress through mitosis. The protein is Centromere protein T (CENPT) of Homo sapiens (Human).